A 310-amino-acid chain; its full sequence is Ribosomal RNA small subunit methyltransferase H (310 aa).

S-adenosyl-L-methionine contacts are provided by residues 33–35 (GGH), Asp-52, Phe-79, Asp-98, and Gln-105.

It belongs to the methyltransferase superfamily. RsmH family.

It is found in the cytoplasm. The enzyme catalyses cytidine(1402) in 16S rRNA + S-adenosyl-L-methionine = N(4)-methylcytidine(1402) in 16S rRNA + S-adenosyl-L-homocysteine + H(+). In terms of biological role, specifically methylates the N4 position of cytidine in position 1402 (C1402) of 16S rRNA. This chain is Ribosomal RNA small subunit methyltransferase H, found in Campylobacter jejuni (strain RM1221).